The primary structure comprises 731 residues: Endopolyphosphatase (731 aa).

Residues 1-4 lie on the Cytoplasmic side of the membrane; it reads MSLS. A helical; Signal-anchor for type II membrane protein transmembrane segment spans residues 5–25; that stretch reads RCILGLACLWHGVIASPLGAV. Topologically, residues 26-731 are vacuolar; sequence PSNIPIATDL…VEKEDLKKFT (706 aa). N106 carries N-linked (GlcNAc...) asparagine glycosylation. The segment at 375 to 403 is disordered; the sequence is KLQPPPTDSKNSGQLKKGKKGRKGKKKKP. The segment covering 390-402 has biased composition (basic residues); sequence KKGKKGRKGKKKK. An N-linked (GlcNAc...) asparagine glycan is attached at N433. A disordered region spans residues 456–522; that stretch reads EQNDRQKHLD…PPGPAYSPQP (67 aa). Composition is skewed to basic and acidic residues over residues 457–474 and 492–501; these read QNDR…PSHM and GGDSKPKKPD. Positions 505–519 are enriched in pro residues; that stretch reads PHPPAKSSPPGPAYS. Residues N534 and N540 are each glycosylated (N-linked (GlcNAc...) asparagine). Residues 626–706 form a disordered region; that stretch reads AKSIDVSYES…HKKKKGKKRQ (81 aa). A compositionally biased stretch (acidic residues) spans 636 to 686; sequence AAEEEEEEEEEEEEDLFEEVEETDEEEEQEDDDLSDGEEVDDDSDEDELET. Basic residues predominate over residues 691–706; that stretch reads KHDKKKHKKKKGKKRQ.

Belongs to the endopolyphosphatase PPN1 family. The cofactor is a divalent metal cation. Post-translationally, processing by proteases in the vacuole may be required for activation.

Its subcellular location is the vacuole membrane. It catalyses the reaction [phosphate](n+1) + n H2O = (n+1) phosphate + n H(+). In terms of biological role, catalyzes the hydrolysis of inorganic polyphosphate (polyP) chains of many hundreds of phosphate residues into shorter lengths. In Neurospora crassa (strain ATCC 24698 / 74-OR23-1A / CBS 708.71 / DSM 1257 / FGSC 987), this protein is Endopolyphosphatase (epp-1).